The chain runs to 803 residues: Translation initiation factor IF-2 (803 aa).

Disordered regions lie at residues 95 to 125 and 138 to 209; these read PVVEQKRETEPAPTQEVPLTSDTTNLNEKAE and EVKE…KLEQ. Residues 111-121 show a composition bias toward polar residues; it reads VPLTSDTTNLN. Positions 138 to 155 are enriched in basic and acidic residues; the sequence is EVKEEAKKTPSEKKETPK. Over residues 156–167 the composition is skewed to basic residues; the sequence is KGPRKETRRSRK. Over residues 168–188 the composition is skewed to basic and acidic residues; sequence PDKEDKWEREELHMTKLVEER. Positions 302-471 constitute a tr-type G domain; it reads PRAPVVTIMG…LLQAEVLELK (170 aa). Positions 311-318 are G1; the sequence is GHVDHGKT. 311 to 318 lines the GTP pocket; it reads GHVDHGKT. The segment at 336-340 is G2; sequence GITQH. The interval 357-360 is G3; sequence DTPG. Residues 357–361 and 411–414 each bind GTP; these read DTPGH and NKID. The G4 stretch occupies residues 411–414; it reads NKID. The tract at residues 447–449 is G5; the sequence is SAK.

Belongs to the TRAFAC class translation factor GTPase superfamily. Classic translation factor GTPase family. IF-2 subfamily.

The protein resides in the cytoplasm. Functionally, one of the essential components for the initiation of protein synthesis. Protects formylmethionyl-tRNA from spontaneous hydrolysis and promotes its binding to the 30S ribosomal subunits. Also involved in the hydrolysis of GTP during the formation of the 70S ribosomal complex. The protein is Translation initiation factor IF-2 of Coxiella burnetii (strain CbuG_Q212) (Coxiella burnetii (strain Q212)).